The following is a 404-amino-acid chain: Phosphoglycerate kinase (404 aa).

Substrate is bound by residues 26–28 (DFN), R41, 64–67 (HLGR), R124, and R161. ATP-binding positions include K212, G301, E332, and 359–362 (GGDS).

It belongs to the phosphoglycerate kinase family. As to quaternary structure, monomer.

It localises to the cytoplasm. The catalysed reaction is (2R)-3-phosphoglycerate + ATP = (2R)-3-phospho-glyceroyl phosphate + ADP. It functions in the pathway carbohydrate degradation; glycolysis; pyruvate from D-glyceraldehyde 3-phosphate: step 2/5. The protein is Phosphoglycerate kinase of Mesomycoplasma hyopneumoniae (strain 232) (Mycoplasma hyopneumoniae).